Consider the following 205-residue polypeptide: Recombination protein RecR (205 aa).

Residues cysteine 59–cysteine 74 form a C4-type zinc finger. The Toprim domain occupies arginine 82 to proline 177.

Belongs to the RecR family.

Functionally, may play a role in DNA repair. It seems to be involved in an RecBC-independent recombinational process of DNA repair. It may act with RecF and RecO. The protein is Recombination protein RecR of Neisseria meningitidis serogroup C (strain 053442).